The chain runs to 143 residues: MFMGEYQHTLDDKSRLIIPAKFRNQLGDTFVVTRWMEHSLFAFPKDEWDKFEEKLNKLPFGAKDARAFRRFVLAGAIESDFDKQGRIIIPTVLKEHAQLNKNVVITGSGNGFEIWSKDNWEEYTAGTAENFDQIAEELTDFDL.

SpoVT-AbrB domains are found at residues 5–47 and 76–119; these read EYQH…PKDE and AIES…SKDN.

The protein belongs to the MraZ family. Forms oligomers.

It is found in the cytoplasm. Its subcellular location is the nucleoid. This Oenococcus oeni (strain ATCC BAA-331 / PSU-1) protein is Transcriptional regulator MraZ.